The sequence spans 116 residues: Transcriptional regulator WhiB4 (116 aa).

In terms of domain architecture, 4Fe-4S Wbl-type spans 36 to 92; it reads LCRATDPDELFVRGAAQRKAAVICRHCPVMQECGADALDNKVEFGVWGGMTERQRRA. 4 residues coordinate [4Fe-4S] cluster: cysteine 37, cysteine 59, cysteine 62, and cysteine 68.

The protein belongs to the WhiB family. The cofactor is [4Fe-4S] cluster. Post-translationally, the Fe-S cluster can be nitrosylated by nitric oxide (NO). In terms of processing, upon Fe-S cluster removal intramolecular disulfide bonds are formed.

The protein resides in the cytoplasm. Its function is as follows. Acts as a transcriptional regulator. Probably redox-responsive. The apo- but not holo-form probably binds DNA. Plays a role in lipooligosaccharide (LOS) biosynthesis by regulating LOS gene expression. This Mycobacterium marinum (strain ATCC BAA-535 / M) protein is Transcriptional regulator WhiB4 (whiB4).